We begin with the raw amino-acid sequence, 41 residues long: Large ribosomal subunit protein bL36 (41 aa).

It belongs to the bacterial ribosomal protein bL36 family.

The protein is Large ribosomal subunit protein bL36 of Maricaulis maris (strain MCS10) (Caulobacter maris).